Reading from the N-terminus, the 643-residue chain is 1-deoxy-D-xylulose-5-phosphate synthase (643 aa).

Thiamine diphosphate contacts are provided by residues H78 and 119–121; that span reads AHS. D150 lines the Mg(2+) pocket. Residues 151–152, N179, Y288, and E370 each bind thiamine diphosphate; that span reads GS. N179 provides a ligand contact to Mg(2+).

The protein belongs to the transketolase family. DXPS subfamily. In terms of assembly, homodimer. It depends on Mg(2+) as a cofactor. Thiamine diphosphate serves as cofactor.

It catalyses the reaction D-glyceraldehyde 3-phosphate + pyruvate + H(+) = 1-deoxy-D-xylulose 5-phosphate + CO2. The protein operates within metabolic intermediate biosynthesis; 1-deoxy-D-xylulose 5-phosphate biosynthesis; 1-deoxy-D-xylulose 5-phosphate from D-glyceraldehyde 3-phosphate and pyruvate: step 1/1. In terms of biological role, catalyzes the acyloin condensation reaction between C atoms 2 and 3 of pyruvate and glyceraldehyde 3-phosphate to yield 1-deoxy-D-xylulose-5-phosphate (DXP). This Brucella ovis (strain ATCC 25840 / 63/290 / NCTC 10512) protein is 1-deoxy-D-xylulose-5-phosphate synthase.